The following is a 149-amino-acid chain: Large ribosomal subunit protein bL9 (149 aa).

Belongs to the bacterial ribosomal protein bL9 family.

In terms of biological role, binds to the 23S rRNA. This is Large ribosomal subunit protein bL9 from Aliivibrio fischeri (strain ATCC 700601 / ES114) (Vibrio fischeri).